Consider the following 225-residue polypeptide: Transmembrane protein C16orf54 homolog (225 aa).

A helical membrane pass occupies residues Ile-34 to Leu-54. The tract at residues Arg-107–Gln-149 is disordered. 2 positions are modified to phosphothreonine: Thr-113 and Thr-117. Ser-195 carries the phosphoserine modification.

It localises to the membrane. The chain is Transmembrane protein C16orf54 homolog from Rattus norvegicus (Rat).